We begin with the raw amino-acid sequence, 460 residues long: Elongation factor 1-alpha (460 aa).

Gly-2 carries the post-translational modification N,N,N-trimethylglycine. An N6,N6-dimethyllysine; alternate modification is found at Lys-3. Lys-3 is modified (N6-methyllysine; alternate). The 236-residue stretch at 5–240 (KTHVNLVVIG…DAIEPPVRPS (236 aa)) folds into the tr-type G domain. The tract at residues 14–21 (GHVDAGKS) is G1. Residue 14-21 (GHVDAGKS) participates in GTP binding. An N6-methyllysine modification is found at Lys-30. The G2 stretch occupies residues 70 to 74 (GITID). N6,N6,N6-trimethyllysine is present on Lys-79. The interval 91–94 (DAPG) is G3. Residues 91–95 (DAPGH) and 153–156 (NKMD) each bind GTP. The G4 stretch occupies residues 153–156 (NKMD). Residues 192 to 194 (SGW) form a G5 region. An N6,N6-dimethyllysine; alternate modification is found at Lys-317. The residue at position 317 (Lys-317) is an N6-methyllysine; alternate. The residue at position 391 (Lys-391) is an N6-methyllysine.

The protein belongs to the TRAFAC class translation factor GTPase superfamily. Classic translation factor GTPase family. EF-Tu/EF-1A subfamily.

It localises to the cytoplasm. In terms of biological role, this protein promotes the GTP-dependent binding of aminoacyl-tRNA to the A-site of ribosomes during protein biosynthesis. In Yarrowia lipolytica (strain CLIB 122 / E 150) (Yeast), this protein is Elongation factor 1-alpha (TEF).